The following is a 319-amino-acid chain: Cell division protein FtsQ (319 aa).

The interval 1–53 (MDSREDMVPDVLLEAPNPRRRQSADTSTERPTRPARREQGYARVTPRGERMGN) is disordered. Residues 1-70 (MDSREDMVPD…PDFFAWFDPR (70 aa)) lie on the Cytoplasmic side of the membrane. Over residues 27-52 (STERPTRPARREQGYARVTPRGERMG) the composition is skewed to basic and acidic residues. Residues 71 to 87 (WLWVPLMVCLAVGGYWA) traverse the membrane as a helical segment. The Periplasmic segment spans residues 88-319 (YEPLEKLLER…NATRNAPTHP (232 aa)). The POTRA domain occupies 97–166 (RPFKSVVVEG…DTLVVKIAEQ (70 aa)).

This sequence belongs to the FtsQ/DivIB family. FtsQ subfamily. Part of a complex composed of FtsB, FtsL and FtsQ.

The protein localises to the cell inner membrane. Essential cell division protein. May link together the upstream cell division proteins, which are predominantly cytoplasmic, with the downstream cell division proteins, which are predominantly periplasmic. May control correct divisome assembly. The chain is Cell division protein FtsQ from Cellvibrio japonicus (strain Ueda107) (Pseudomonas fluorescens subsp. cellulosa).